The primary structure comprises 227 residues: N-(5'-phosphoribosyl)anthranilate isomerase (227 aa).

Belongs to the TrpF family.

The enzyme catalyses N-(5-phospho-beta-D-ribosyl)anthranilate = 1-(2-carboxyphenylamino)-1-deoxy-D-ribulose 5-phosphate. The protein operates within amino-acid biosynthesis; L-tryptophan biosynthesis; L-tryptophan from chorismate: step 3/5. The sequence is that of N-(5'-phosphoribosyl)anthranilate isomerase from Herminiimonas arsenicoxydans.